A 240-amino-acid polypeptide reads, in one-letter code: uncharacterized protein (240 aa).

In terms of domain architecture, ABC transporter spans 2–223 (VRIQDLSLAF…GNAPRELHQA (222 aa)). 34–41 (GSSGVGKS) lines the ATP pocket.

This sequence belongs to the ABC transporter superfamily.

This is an uncharacterized protein from Haemophilus influenzae (strain ATCC 51907 / DSM 11121 / KW20 / Rd).